We begin with the raw amino-acid sequence, 175 residues long: Large ribosomal subunit protein uL10 (175 aa).

Belongs to the universal ribosomal protein uL10 family. As to quaternary structure, part of the ribosomal stalk of the 50S ribosomal subunit. The N-terminus interacts with L11 and the large rRNA to form the base of the stalk. The C-terminus forms an elongated spine to which L12 dimers bind in a sequential fashion forming a multimeric L10(L12)X complex.

Its function is as follows. Forms part of the ribosomal stalk, playing a central role in the interaction of the ribosome with GTP-bound translation factors. This chain is Large ribosomal subunit protein uL10, found in Prochlorococcus marinus (strain MIT 9515).